Here is a 104-residue protein sequence, read N- to C-terminus: Large ribosomal subunit protein bL21 (104 aa).

It belongs to the bacterial ribosomal protein bL21 family. As to quaternary structure, part of the 50S ribosomal subunit. Contacts protein L20.

This protein binds to 23S rRNA in the presence of protein L20. The protein is Large ribosomal subunit protein bL21 of Endomicrobium trichonymphae.